A 284-amino-acid chain; its full sequence is MAFINSAAEDEVQFEGIKRRLRSSGITKEAVTSLGAGETLEDEFDIASTSDLASGGPVSIRSHGFVPIVVDGKITGYIPYKSNDLTVNVDGGKAAKVTKALSQLTRRTEVTDCKGDAESSLTTALSNAAKLANQAAEAAESGDESKFEEYFKTTDQQTRTTVAERLRAVAKEAGSTSGGSTTYHCSDPYGYCEPNVLAYTLPSKNEIANCDIYYSELPPLAQKCHAQDQATTTLHEFTHAPGVYQPGTEDLGYGYDAATQLSAQDALNNADSYALYANAIELKC.

Intrachain disulfides connect Cys113-Cys185 and Cys192-Cys210. His235 is a Zn(2+) binding site. Glu236 is a catalytic residue. Residues His239 and Asp250 each contribute to the Zn(2+) site.

Belongs to the peptidase M35 family. It depends on Zn(2+) as a cofactor.

It is found in the secreted. It catalyses the reaction Preferential cleavage of bonds with hydrophobic residues in P1'. Also 3-Asn-|-Gln-4 and 8-Gly-|-Ser-9 bonds in insulin B chain.. In terms of biological role, secreted metalloproteinase that allows assimilation of proteinaceous substrates. Shows high activities on basic nuclear substrates such as histone and protamine. This chain is Neutral protease 2 homolog AFLA_119780, found in Aspergillus flavus (strain ATCC 200026 / FGSC A1120 / IAM 13836 / NRRL 3357 / JCM 12722 / SRRC 167).